A 704-amino-acid chain; its full sequence is Elongation factor G (704 aa).

The tr-type G domain occupies 8–290; it reads ARYRNIGISA…AVIDYLPSPV (283 aa). Residues 17–24, 88–92, and 142–145 each bind GTP; these read AHIDAGKT, DTPGH, and NKMD. N6-acetyllysine occurs at positions 504 and 643.

This sequence belongs to the TRAFAC class translation factor GTPase superfamily. Classic translation factor GTPase family. EF-G/EF-2 subfamily.

The protein resides in the cytoplasm. Its function is as follows. Catalyzes the GTP-dependent ribosomal translocation step during translation elongation. During this step, the ribosome changes from the pre-translocational (PRE) to the post-translocational (POST) state as the newly formed A-site-bound peptidyl-tRNA and P-site-bound deacylated tRNA move to the P and E sites, respectively. Catalyzes the coordinated movement of the two tRNA molecules, the mRNA and conformational changes in the ribosome. The protein is Elongation factor G of Shigella flexneri.